The following is a 372-amino-acid chain: Serine protease 44 (372 aa).

The first 25 residues, 1 to 25 (MAFQGCDCFGLLVWLLLLQTRLGKA), serve as a signal peptide directing secretion. Topologically, residues 26-351 (RMVPGTPSLS…KELSRASCWK (326 aa)) are extracellular. Residues 31 to 72 (TPSLSPLPSENGLDDSGVNPQERPLTGMPETSLPRKPGDSTR) form a disordered region. The Peptidase S1 domain occupies 112–345 (IVGGRPAPAR…YRDWIIKELS (234 aa)). Residues C137 and C153 are joined by a disulfide bond. Active-site charge relay system residues include H152 and D197. N208 carries an N-linked (GlcNAc...) asparagine glycan. 3 disulfide bridges follow: C231/C303, C262/C283, and C293/C321. S297 functions as the Charge relay system in the catalytic mechanism. Residues 352–372 (LSGFLVLSVCLVLHLAIVVAL) form a helical membrane-spanning segment.

It belongs to the peptidase S1 family. As to expression, testis-specific. Expressed by primary and secondary spermatocytes.

It is found in the membrane. Its subcellular location is the cytoplasm. In terms of biological role, lacks protease activity in vitro. This Mus musculus (Mouse) protein is Serine protease 44.